Consider the following 59-residue polypeptide: Beta-defensin 134 (59 aa).

An N-terminal signal peptide occupies residues 1-19 (MKPLLVVFVFLFLWDPVLA). 3 disulfides stabilise this stretch: cysteine 25/cysteine 51, cysteine 31/cysteine 45, and cysteine 35/cysteine 52.

This sequence belongs to the beta-defensin family.

It is found in the secreted. Its function is as follows. Has antibacterial activity. The polypeptide is Beta-defensin 134 (DEFB134) (Pan troglodytes (Chimpanzee)).